The sequence spans 100 residues: MGVYKFCYNKKKEVGQVAVLQKERLIFYIVTKEKSYLKPTLANFSNAIDSLYNECLLRKCCKLAIPKIGCCLDRLYWKTVKNIIIDKLCKKGIEVVVYYI.

This is an uncharacterized protein from Acheta domesticus (House cricket).